A 386-amino-acid polypeptide reads, in one-letter code: S-adenosylmethionine:tRNA ribosyltransferase-isomerase (386 aa).

It belongs to the QueA family. As to quaternary structure, monomer.

The protein localises to the cytoplasm. It carries out the reaction 7-aminomethyl-7-carbaguanosine(34) in tRNA + S-adenosyl-L-methionine = epoxyqueuosine(34) in tRNA + adenine + L-methionine + 2 H(+). The protein operates within tRNA modification; tRNA-queuosine biosynthesis. Transfers and isomerizes the ribose moiety from AdoMet to the 7-aminomethyl group of 7-deazaguanine (preQ1-tRNA) to give epoxyqueuosine (oQ-tRNA). The sequence is that of S-adenosylmethionine:tRNA ribosyltransferase-isomerase from Rickettsia canadensis (strain McKiel).